The primary structure comprises 137 residues: ATP synthase epsilon chain, sodium ion specific (137 aa).

Belongs to the ATPase epsilon chain family. As to quaternary structure, F-type ATPases have 2 components, CF(1) - the catalytic core - and CF(0) - the membrane proton channel. CF(1) has five subunits: alpha(3), beta(3), gamma(1), delta(1), epsilon(1). CF(0) has three main subunits: a, b and c.

It localises to the cell inner membrane. In terms of biological role, produces ATP from ADP in the presence of a sodium gradient across the membrane. The polypeptide is ATP synthase epsilon chain, sodium ion specific (atpC) (Propionigenium modestum).